Reading from the N-terminus, the 498-residue chain is ATP synthase subunit beta, chloroplastic (498 aa).

Residues 1-14 (MRTNPTTSRPGVST) show a composition bias toward polar residues. The tract at residues 1 to 20 (MRTNPTTSRPGVSTSEEKST) is disordered. 172–179 (GGAGVGKT) serves as a coordination point for ATP.

This sequence belongs to the ATPase alpha/beta chains family. As to quaternary structure, F-type ATPases have 2 components, CF(1) - the catalytic core - and CF(0) - the membrane proton channel. CF(1) has five subunits: alpha(3), beta(3), gamma(1), delta(1), epsilon(1). CF(0) has four main subunits: a(1), b(1), b'(1) and c(9-12).

The protein resides in the plastid. It localises to the chloroplast thylakoid membrane. It carries out the reaction ATP + H2O + 4 H(+)(in) = ADP + phosphate + 5 H(+)(out). Produces ATP from ADP in the presence of a proton gradient across the membrane. The catalytic sites are hosted primarily by the beta subunits. The polypeptide is ATP synthase subunit beta, chloroplastic (Hordeum vulgare (Barley)).